The primary structure comprises 454 residues: CCA-adding enzyme (454 aa).

2 residues coordinate ATP: serine 59 and arginine 62. Residues serine 59 and arginine 62 each contribute to the CTP site. Residues aspartate 71, aspartate 73, and aspartate 125 each coordinate Mg(2+). ATP is bound by residues histidine 148, lysine 167, and tyrosine 176. 3 residues coordinate CTP: histidine 148, lysine 167, and tyrosine 176.

The protein belongs to the tRNA nucleotidyltransferase/poly(A) polymerase family. Archaeal CCA-adding enzyme subfamily. As to quaternary structure, homodimer. Mg(2+) serves as cofactor.

The enzyme catalyses a tRNA precursor + 2 CTP + ATP = a tRNA with a 3' CCA end + 3 diphosphate. It catalyses the reaction a tRNA with a 3' CCA end + 2 CTP + ATP = a tRNA with a 3' CCACCA end + 3 diphosphate. In terms of biological role, catalyzes the addition and repair of the essential 3'-terminal CCA sequence in tRNAs without using a nucleic acid template. Adds these three nucleotides in the order of C, C, and A to the tRNA nucleotide-73, using CTP and ATP as substrates and producing inorganic pyrophosphate. tRNA 3'-terminal CCA addition is required both for tRNA processing and repair. Also involved in tRNA surveillance by mediating tandem CCA addition to generate a CCACCA at the 3' terminus of unstable tRNAs. While stable tRNAs receive only 3'-terminal CCA, unstable tRNAs are marked with CCACCA and rapidly degraded. The polypeptide is CCA-adding enzyme (Methanosarcina acetivorans (strain ATCC 35395 / DSM 2834 / JCM 12185 / C2A)).